The sequence spans 449 residues: Probable rhamnogalacturonase E (449 aa).

An N-terminal signal peptide occupies residues 1–21 (MRSKTFSVLSSCLLLIATVQG). Cysteines 42 and 68 form a disulfide. Residues Asn-53, Asn-91, and Asn-106 are each glycosylated (N-linked (GlcNAc...) asparagine). Asp-221 (proton donor) is an active-site residue. A disulfide bond links Cys-223 and Cys-240. Asn-241 and Asn-256 each carry an N-linked (GlcNAc...) asparagine glycan. His-296 is an active-site residue. The N-linked (GlcNAc...) asparagine glycan is linked to Asn-323. Disulfide bonds link Cys-346-Cys-352 and Cys-374-Cys-383.

Belongs to the glycosyl hydrolase 28 family.

Its subcellular location is the secreted. It catalyses the reaction Endohydrolysis of alpha-D-GalA-(1-&gt;2)-alpha-L-Rha glycosidic bond in the rhamnogalacturonan I backbone with initial inversion of anomeric configuration releasing oligosaccharides with beta-D-GalA at the reducing end.. Pectinolytic enzymes consist of four classes of enzymes: pectine lyase, polygalacturonase, pectin methylesterase and rhamnogalacturonase. Hydrolyzes alpha-D-galacturonopyranosyl-(1,2)-alpha-L-rhamnopyranosyl linkages in the backbone of the hairy regions of pectins. In Aspergillus flavus (strain ATCC 200026 / FGSC A1120 / IAM 13836 / NRRL 3357 / JCM 12722 / SRRC 167), this protein is Probable rhamnogalacturonase E (rhgE).